A 256-amino-acid chain; its full sequence is uncharacterized protein (256 aa).

A signal peptide spans Met1–Gly23. A lipid anchor (N-palmitoyl cysteine) is attached at Cys24. Residue Cys24 is the site of S-diacylglycerol cysteine attachment.

This sequence belongs to the staphylococcal tandem lipoprotein family.

It localises to the cell membrane. This is an uncharacterized protein from Staphylococcus aureus (strain COL).